A 299-amino-acid polypeptide reads, in one-letter code: Tryptophan prenyltransferase ComQ (299 aa).

Mg(2+) is bound by residues D67 and D71.

Belongs to the FPP/GGPP synthase family. It depends on Mg(2+) as a cofactor.

Its subcellular location is the cell membrane. The enzyme catalyses L-tryptophyl-[protein] + (2E,6E)-farnesyl diphosphate = (2S,3R)-3-farnesyl-2,3-dihydro-2,N(alpha)-cyclo-L-tryptophyl-[protein] + diphosphate. Functionally, part of a major quorum-sensing system that regulates the development of genetic competence. Involved in the maturation of the competence pheromone ComX. Acts by catalyzing the transfer of a farnesyl group on the ComX pheromone. Shows weak geranylation activity with geranyl diphosphate (GPP). In Bacillus subtilis (strain 168), this protein is Tryptophan prenyltransferase ComQ.